A 90-amino-acid polypeptide reads, in one-letter code: DNA/RNA-binding protein Alba (90 aa).

An N6-acetyllysine modification is found at lysine 11.

It belongs to the histone-like Alba family. Post-translationally, acetylated. Acetylation at Lys-11 decreases DNA-binding affinity.

The protein resides in the cytoplasm. The protein localises to the chromosome. Binds double-stranded DNA tightly but without sequence specificity. Involved in DNA compaction. This chain is DNA/RNA-binding protein Alba, found in Picrophilus torridus (strain ATCC 700027 / DSM 9790 / JCM 10055 / NBRC 100828 / KAW 2/3).